The primary structure comprises 598 residues: F-box/WD repeat-containing protein 8 (598 aa).

Met1 bears the N-acetylmethionine mark. The disordered stretch occupies residues 20-97 (SQALRRRRRL…PDRDATEPEP (78 aa)). Positions 29–44 (LEAGERRSPRRPEAGA) are enriched in basic and acidic residues. Residues 51-65 (GYLGLAQGLLEGAGR) show a composition bias toward low complexity. Residues 73–93 (RGGDRKDTSSRSRSPPDRDAT) show a composition bias toward basic and acidic residues. Ser84 bears the Phosphoserine mark. A Phosphoserine; by MTOR modification is found at Ser86. An F-box domain is found at 113–159 (PFFDVRLPYELAINIFQYLNRRELGLCAQVSKTWKVIAEDEVLWYRL). WD repeat units lie at residues 201 to 250 (AVSE…LESE), 259 to 299 (QPYV…FEHD), 300 to 340 (ARIQ…SEFE), 341 to 383 (VQKL…LHYV), 384 to 429 (YGQP…SKLG), 430 to 475 (NALG…SAHQ), 476 to 513 (LGVS…EVHS), and 514 to 561 (RHPV…AYEF).

As to quaternary structure, component of the Cul7-RING(FBXW8) complex consisting of CUL7, RBX1, SKP1 and FBXW8; within the complex interacts with CUL7 and SKP1. Interacts with GLMN isoform 1. Interacts with OBSL1, CUL1, CUL2, CCT6B, PFDN5, CCT2, CCT3, CCT6A, CCT7, VBP1, CCDC8, ARF1, TRIP13, PDCD5 and GORASP1. Interacts with MAP4K1/HPK1 (when autophosphorylated). Associated component of the 3M complex. Interacts with POUF51 (when phosphorylated on 'Ser-347'). Post-translationally, phosphorylation at Ser-86 by mTORC2 promotes FBXW8 stabilization, allowing its translocation to the cytosol in response to insulin. Widely expressed. Expressed at higher level in skeletal muscle, cartilage and lung.

The protein localises to the cytoplasm. The protein resides in the perinuclear region. It localises to the golgi apparatus. It is found in the cytosol. It functions in the pathway protein modification; protein ubiquitination. Its function is as follows. Substrate-recognition component of the Cul7-RING(FBXW8) ubiquitin ligase complex, which mediates the ubiquitination and subsequent proteasomal degradation of target proteins. The Cul7-RING(FBXW8) complex mediates ubiquitination and consequent degradation of GORASP1, acting as a component of the ubiquitin ligase pathway that regulates Golgi morphogenesis and dendrite patterning in brain. Mediates ubiquitination and degradation of IRS1 in a mTOR-dependent manner: the Cul7-RING(FBXW8) complex recognizes and binds IRS1 previously phosphorylated by S6 kinase (RPS6KB1 or RPS6KB2). The Cul7-RING(FBXW8) complex also mediates ubiquitination of MAP4K1/HPK1: recognizes and binds autophosphorylated MAP4K1/HPK1, leading to its degradation, thereby affecting cell proliferation and differentiation. The Cul7-RING(FBXW8) complex also mediates ubiquitination of phosphorylated cyclin-D1 (CCND1). The Cul7-RING(FBXW8) complex is however not a major regulator of CCND1 stability during the G1/S transition. Associated component of the 3M complex, suggesting that it mediates some of 3M complex functions. The chain is F-box/WD repeat-containing protein 8 (Fbxw8) from Mus musculus (Mouse).